The following is a 211-amino-acid chain: WUSCHEL-related homeobox 14 (211 aa).

Positions Ser-91 to Gln-155 form a DNA-binding region, homeobox; WUS-type. The tract at residues Arg-147 to Gly-183 is disordered.

This sequence belongs to the WUS homeobox family. As to expression, expressed in root vasculature, pericycle and stamen. Expressed in the procambium during stem maturation.

It is found in the nucleus. Its function is as follows. Acts redundantly with WOX4 downstream of the TDR/PXY receptor kinase to regulate procambial cell proliferation and differentiation in vascular tissue, independently of any role in vascular. Involved in the regulation of gibberellin (GA) biosynthesis pathway. Positively regulates the expression of the GA biosynthesis gene GA3OX1, and negatively regulates the expression of GA2OX1 during secondary growth, which increases bioactive GA content in the inflorescence stem. Promotes vascular cell differentiation in the inflorescence stem. In terms of biological role, transcription factor which may be involved in developmental processes. This Arabidopsis thaliana (Mouse-ear cress) protein is WUSCHEL-related homeobox 14 (WOX14).